The primary structure comprises 515 residues: ADP,ATP carrier protein 1 (515 aa).

A run of 12 helical transmembrane segments spans residues 24-44 (LKKV…YTVL), 62-82 (AIPF…MLIY), 93-113 (ALFY…PTVI), 124-144 (EFAD…VAIL), 149-169 (FAAF…LMFW), 184-204 (FYAL…RAIV), 226-246 (LLMA…WWIN), 286-306 (YILL…LIEV), 329-349 (FSFW…GNVI), 358-378 (ALVT…LVIF), 383-403 (SGLV…VGAI), and 465-485 (IGAM…IWLV).

It belongs to the ADP/ATP translocase tlc family.

The protein resides in the cell membrane. The polypeptide is ADP,ATP carrier protein 1 (tlcA) (Chlamydia pneumoniae (Chlamydophila pneumoniae)).